Consider the following 497-residue polypeptide: Vacuolar-processing enzyme beta-isozyme 1 (497 aa).

Residues 1–23 (MAARCWVWGFVVALLAVAAAADG) form the signal peptide. N-linked (GlcNAc...) asparagine glycosylation occurs at Asn-153. Residue His-180 is part of the active site. Cys-222 acts as the Nucleophile in catalysis. Cys-255 and Cys-269 are disulfide-bonded. N-linked (GlcNAc...) asparagine glycosylation occurs at Asn-340. 2 disulfides stabilise this stretch: Cys-432–Cys-462 and Cys-444–Cys-479.

It belongs to the peptidase C13 family. Auto-catalytic activation. As to expression, expressed in developing seeds.

The protein resides in the protein storage vacuole. It catalyses the reaction Hydrolysis of proteins and small molecule substrates at -Asn-|-Xaa- bonds.. Functionally, asparagine-specific endopeptidase that may be involved in processing of proteins targeted to vacuoles. Cysteine protease required for post-translational proteolysis of seed storage proteins in the protein storage vacuole (PSV) of developing seeds, by processing of proglutelin precursor to mature glutelin subunits, thus contributing to the formation of protein crystalline structures in PSV. The protein is Vacuolar-processing enzyme beta-isozyme 1 of Oryza sativa subsp. japonica (Rice).